A 579-amino-acid polypeptide reads, in one-letter code: O-fucosyltransferase 24 (579 aa).

A helical; Signal-anchor for type II membrane protein transmembrane segment spans residues 58–78 (LWAFSLFLLSILGISLRLGLC). An N-linked (GlcNAc...) asparagine glycan is attached at Asn-133. Residue 355 to 357 (HLR) coordinates substrate. N-linked (GlcNAc...) asparagine glycans are attached at residues Asn-528, Asn-573, and Asn-576.

It belongs to the glycosyltransferase GT106 family.

It localises to the membrane. Its pathway is glycan metabolism. In Arabidopsis thaliana (Mouse-ear cress), this protein is O-fucosyltransferase 24.